The primary structure comprises 1002 residues: MARAPRWMLGWLLLACCVPHTEPLAVMSVDMGSESMKIAIVKPGVPMEIVLNKESRRKTPVAVALKENERLFGDSALGMSIKTPKVAFRYFQDLLGKQIDNPQVALYQSRFPEHELVKDEKRQTVIFKLSQTLQYSPEEMLGMVLNYSRGLAEEFAEQPIKDAVITVPAYFNQAERRAVLHAARMADLKVLQLINDNTAVALNYGVSGGKTSMPLHSFSFQNIMFYDMGAGSTVCTIVTYQTVKTKDSGTQPQLQIQGIGFDRTLGGLEMELRLRDYLAKLFNDQHPSKDVRKNPRAMAKLLKEANRLKTVLSANADHMAQIEGLLDDIDFKAKVSRQEFEDLCSDLFQRVPGPVQQALSSAEMNLDGIDQVILVGGATRVPKVQEVLLKAVGKEELGKNINADEAAAMGAVYQAAALSKAFKVKPFMVRDAAMFPIQVEFTREVEEDDKSKSLKHNKRILFQRMAPYPQRKVITFNRYTDDFEFYVNYGDLSFLNQDDLRIFGSLNLTTVRLKGVGESFKKHSDYESKGIKAHFNMDESGVLSLDRVESVFETLVEDKLEEESTLTKLGNTISSLFGGGGHTPEAGENLTDSVQEEEESLAEAAKEEQGVKQGQKSSAEDAGEEQGEEKQQSPHPDQAEAVPPKEESQKNEEGEKSEARDPKEDKETVNEEELSKSSGAGTAAKAEEEKKIKAPKKQKLVHEITMELDVNDVPDLLEDELKSSMKKLQDLTIRDLEKQEREKSANSLESFIFETQDKLYQEEYLFVSTEEEREEISKKLSEASNWMEEEGYAAATKELKDKLAELKKLCRNLFFRVEERRKWPERLAALESLLNHSNIFLKGARMIPESDQIFTEVELGTLEKAINETTVWKNETLAEQNKLSPAEKPVLLSKDIELKIAGLDREVQYLLDKAKFAKPKPKKEKNATKSDSGKNATGTSESENTIPPTEGKQEEKPEDISPAKEPPTTEKVVTDDEPGSDSSSKKEKKPEAGGESRKNDEL.

Residues 1–23 (MARAPRWMLGWLLLACCVPHTEP) form the signal peptide. 2 disordered regions span residues 576–698 (LFGG…PKKQ) and 918–1002 (KPKP…NDEL). Positions 643–675 (PPKEESQKNEEGEKSEARDPKEDKETVNEEELS) are enriched in basic and acidic residues. Residues 933-947 (GKNATGTSESENTIP) are compositionally biased toward polar residues. 2 stretches are compositionally biased toward basic and acidic residues: residues 951–962 (GKQEEKPEDISP) and 983–1002 (SSKK…NDEL). The Prevents secretion from ER signature appears at 999-1002 (NDEL).

Belongs to the heat shock protein 70 family.

It localises to the endoplasmic reticulum lumen. Its function is as follows. Has a pivotal role in cytoprotective cellular mechanisms triggered by oxygen deprivation. Promotes HSPA5/BiP-mediated ATP nucleotide exchange and thereby activates the unfolded protein response (UPR) pathway in the presence of endoplasmic reticulum stress. May play a role as a molecular chaperone and participate in protein folding. This chain is Hypoxia up-regulated protein 1 (HYOU1), found in Gallus gallus (Chicken).